Reading from the N-terminus, the 144-residue chain is Large ribosomal subunit protein uL15 (144 aa).

Positions 1–49 (MRLNTLSPAAGAKSAAKRVGRGIGSGLGKTAGRGHKGQKSRSGGGVRVG) are disordered. Positions 21 to 31 (RGIGSGLGKTA) are enriched in gly residues.

This sequence belongs to the universal ribosomal protein uL15 family. Part of the 50S ribosomal subunit.

Functionally, binds to the 23S rRNA. This is Large ribosomal subunit protein uL15 from Shewanella piezotolerans (strain WP3 / JCM 13877).